A 284-amino-acid chain; its full sequence is Nucleotide-binding protein Shewmr7_3352 (284 aa).

An ATP-binding site is contributed by 8-15 (GRSGSGKS). 56–59 (DVRN) provides a ligand contact to GTP.

This sequence belongs to the RapZ-like family.

In terms of biological role, displays ATPase and GTPase activities. This chain is Nucleotide-binding protein Shewmr7_3352, found in Shewanella sp. (strain MR-7).